The sequence spans 154 residues: Nucleoside diphosphate kinase A2 (154 aa).

Positions 13, 61, 89, 95, 106, and 116 each coordinate ATP. H119 acts as the Pros-phosphohistidine intermediate in catalysis.

It belongs to the NDK family. It depends on Mg(2+) as a cofactor.

It is found in the cytoplasm. It carries out the reaction a 2'-deoxyribonucleoside 5'-diphosphate + ATP = a 2'-deoxyribonucleoside 5'-triphosphate + ADP. The catalysed reaction is a ribonucleoside 5'-diphosphate + ATP = a ribonucleoside 5'-triphosphate + ADP. Its function is as follows. Major role in the synthesis of nucleoside triphosphates other than ATP. The ATP gamma phosphate is transferred to the NDP beta phosphate via a ping-pong mechanism, using a phosphorylated active-site intermediate. The protein is Nucleoside diphosphate kinase A2 of Xenopus laevis (African clawed frog).